Reading from the N-terminus, the 328-residue chain is Biotin synthase (328 aa).

Residues 49–273 (FNKEKIETCS…ICISRIIMPE (225 aa)) form the Radical SAM core domain. Residues C67, C71, and C74 each coordinate [4Fe-4S] cluster. Residues S110, C142, C201, and R277 each coordinate [2Fe-2S] cluster.

Belongs to the radical SAM superfamily. Biotin synthase family. As to quaternary structure, homodimer. [4Fe-4S] cluster serves as cofactor. The cofactor is [2Fe-2S] cluster.

It catalyses the reaction (4R,5S)-dethiobiotin + (sulfur carrier)-SH + 2 reduced [2Fe-2S]-[ferredoxin] + 2 S-adenosyl-L-methionine = (sulfur carrier)-H + biotin + 2 5'-deoxyadenosine + 2 L-methionine + 2 oxidized [2Fe-2S]-[ferredoxin]. It functions in the pathway cofactor biosynthesis; biotin biosynthesis; biotin from 7,8-diaminononanoate: step 2/2. In terms of biological role, catalyzes the conversion of dethiobiotin (DTB) to biotin by the insertion of a sulfur atom into dethiobiotin via a radical-based mechanism. In Methanococcus vannielii (strain ATCC 35089 / DSM 1224 / JCM 13029 / OCM 148 / SB), this protein is Biotin synthase.